A 306-amino-acid polypeptide reads, in one-letter code: MDALKSAGRALIRSPSLAKQSWAGGRHRKLPENWTDTRETLLEGMVFSLKYLGMTLVERPKGEELSAAAVKRIVATAKASGKKLQKVTLKVSPRGIILTDSLTSQLIENVSIYRISYCTAQMHDKVFAYIAQSQQNESLECHAFLCTKRKVAQAVTLTVAQAFKVAFEFWQVSKEEKEKREKANQEGGDVPGTRRDSTPSLKTSVATGNLLDLEELAKAPLSTVSANTKNMDDALRPQVLGNNSVVWELDDGLDEAFSRLAQSRTNPQVLDTGLTAQDIHYAQCLSPTDWDKPDSSGFDQDDVFSF.

Methionine 1 bears the N-acetylmethionine mark. Serine 14 is modified (phosphoserine). The 125-residue stretch at 44–168 folds into the PID domain; that stretch reads GMVFSLKYLG…VAQAFKVAFE (125 aa). Residues 178–204 are disordered; it reads EKREKANQEGGDVPGTRRDSTPSLKTS. Phosphoserine is present on residues serine 197 and serine 200. A Clathrin box motif is present at residues 210–214; it reads LLDLE. Positions 247-274 are AP-2 complex binding; that stretch reads WELDDGLDEAFSRLAQSRTNPQVLDTGL. Positions 255–264 match the [DE]-X(1,2)-F-X-X-[FL]-X-X-X-R motif motif; sequence EAFSRLAQSR.

As to quaternary structure, interacts (via PID domain) with LDLR (via NPXY motifs). Binds to soluble clathrin trimers. Interacts with AP2B1; the interaction mediates the association with the AP-2 complex. Interacts with VLDLR. Interacts with LRP2.

The protein localises to the cytoplasm. In terms of biological role, adapter protein (clathrin-associated sorting protein (CLASP)) required for efficient endocytosis of the LDL receptor (LDLR) in polarized cells such as hepatocytes and lymphocytes, but not in non-polarized cells (fibroblasts). May be required for LDL binding and internalization but not for receptor clustering in coated pits. May facilitate the endocytosis of LDLR and LDLR-LDL complexes from coated pits by stabilizing the interaction between the receptor and the structural components of the pits. May also be involved in the internalization of other LDLR family members. Binds to phosphoinositides, which regulate clathrin bud assembly at the cell surface. Required for trafficking of LRP2 to the endocytic recycling compartment which is necessary for LRP2 proteolysis, releasing a tail fragment which translocates to the nucleus and mediates transcriptional repression. The protein is Low density lipoprotein receptor adapter protein 1 of Rattus norvegicus (Rat).